Consider the following 201-residue polypeptide: Glutathione peroxidase 1 (201 aa).

The residue at position 32 (Ser-32) is a Phosphoserine. The active site involves Sec-47. Position 47 (Sec-47) is a non-standard amino acid, selenocysteine. An N6-acetyllysine; alternate mark is found at Lys-86, Lys-112, and Lys-146. N6-succinyllysine; alternate is present on residues Lys-86, Lys-112, and Lys-146. 2 positions are modified to phosphoserine: Ser-195 and Ser-199.

The protein belongs to the glutathione peroxidase family. Homotetramer. Interacts with MIEN1. Post-translationally, during periods of oxidative stress, Sec-47 may react with a superoxide radical, irreversibly lose hydroselenide and be converted to dehydroalanine.

Its subcellular location is the cytoplasm. The protein resides in the mitochondrion. It carries out the reaction 2 glutathione + H2O2 = glutathione disulfide + 2 H2O. The catalysed reaction is a hydroperoxy polyunsaturated fatty acid + 2 glutathione = a hydroxy polyunsaturated fatty acid + glutathione disulfide + H2O. It catalyses the reaction tert-butyl hydroperoxide + 2 glutathione = tert-butanol + glutathione disulfide + H2O. The enzyme catalyses cumene hydroperoxide + 2 glutathione = 2-phenylpropan-2-ol + glutathione disulfide + H2O. It carries out the reaction (13S)-hydroperoxy-(9Z,11E)-octadecadienoate + 2 glutathione = (13S)-hydroxy-(9Z,11E)-octadecadienoate + glutathione disulfide + H2O. The catalysed reaction is (9S)-hydroperoxy-(10E,12Z)-octadecadienoate + 2 glutathione = (9S)-hydroxy-(10E,12Z)-octadecadienoate + glutathione disulfide + H2O. It catalyses the reaction (5S)-hydroperoxy-(6E,8Z,11Z,14Z)-eicosatetraenoate + 2 glutathione = (5S)-hydroxy-(6E,8Z,11Z,14Z)-eicosatetraenoate + glutathione disulfide + H2O. The enzyme catalyses (12S)-hydroperoxy-(5Z,8Z,10E,14Z)-eicosatetraenoate + 2 glutathione = (12S)-hydroxy-(5Z,8Z,10E,14Z)-eicosatetraenoate + glutathione disulfide + H2O. It carries out the reaction (12R)-hydroperoxy-(5Z,8Z,10E,14Z)-eicosatetraenoate + 2 glutathione = (12R)-hydroxy-(5Z,8Z,10E,14Z)-eicosatetraenoate + glutathione disulfide + H2O. The catalysed reaction is (15S)-hydroperoxy-(5Z,8Z,11Z,13E)-eicosatetraenoate + 2 glutathione = (15S)-hydroxy-(5Z,8Z,11Z,13E)-eicosatetraenoate + glutathione disulfide + H2O. It catalyses the reaction (5S)-hydroperoxy-(6E,8Z,11Z,14Z,17Z)-eicosapentaenoate + 2 glutathione = (5S)-hydroxy-(6E,8Z,11Z,14Z,17Z)-eicosapentaenoate + glutathione disulfide + H2O. The enzyme catalyses (12S)-hydroperoxy-(5Z,8Z,10E,14Z,17Z)-eicosapentaenoate + 2 glutathione = (12S)-hydroxy-(5Z,8Z,10E,14Z,17Z)-eicosapentaenoate + glutathione disulfide + H2O. It carries out the reaction (15S)-hydroperoxy-(5Z,8Z,11Z,13E,17Z)-eicosapentaenoate + 2 glutathione = (15S)-hydroxy-(5Z,8Z,11Z,13E,17Z)-eicosapentaenoate + glutathione disulfide + H2O. The catalysed reaction is (15S)-hydroperoxy-(11Z,13E)-eicosadienoate + 2 glutathione = (15S)-hydroxy-(11Z,13E)-eicosadienoate + glutathione disulfide + H2O. It catalyses the reaction (17S)-hydroperoxy-(4Z,7Z,10Z,13Z,15E,19Z)-docosahexaenoate + 2 glutathione = (17S)-hydroxy-(4Z,7Z,10Z,13Z,15E,19Z)-docosahexaenoate + glutathione disulfide + H2O. Functionally, catalyzes the reduction of hydroperoxides in a glutathione-dependent manner thus regulating cellular redox homeostasis. Can reduce small soluble hydroperoxides such as H2O2, cumene hydroperoxide and tert-butyl hydroperoxide, as well as several fatty acid-derived hydroperoxides. In platelets catalyzes the reduction of 12-hydroperoxyeicosatetraenoic acid, the primary product of the arachidonate 12-lipoxygenase pathway. This Callithrix jacchus (White-tufted-ear marmoset) protein is Glutathione peroxidase 1 (GPX1).